Consider the following 388-residue polypeptide: Dual-specificity RNA methyltransferase RlmN (388 aa).

Glu-109 serves as the catalytic Proton acceptor. One can recognise a Radical SAM core domain in the interval 115–354 (EEDRATLCVS…TIVRKTRGDD (240 aa)). A disulfide bridge links Cys-122 with Cys-359. [4Fe-4S] cluster is bound by residues Cys-129, Cys-133, and Cys-136. S-adenosyl-L-methionine-binding positions include 183-184 (GE), Ser-215, 237-239 (SLH), and Asn-316. Cys-359 functions as the S-methylcysteine intermediate in the catalytic mechanism.

It belongs to the radical SAM superfamily. RlmN family. [4Fe-4S] cluster is required as a cofactor.

The protein resides in the cytoplasm. It carries out the reaction adenosine(2503) in 23S rRNA + 2 reduced [2Fe-2S]-[ferredoxin] + 2 S-adenosyl-L-methionine = 2-methyladenosine(2503) in 23S rRNA + 5'-deoxyadenosine + L-methionine + 2 oxidized [2Fe-2S]-[ferredoxin] + S-adenosyl-L-homocysteine. It catalyses the reaction adenosine(37) in tRNA + 2 reduced [2Fe-2S]-[ferredoxin] + 2 S-adenosyl-L-methionine = 2-methyladenosine(37) in tRNA + 5'-deoxyadenosine + L-methionine + 2 oxidized [2Fe-2S]-[ferredoxin] + S-adenosyl-L-homocysteine. Functionally, specifically methylates position 2 of adenine 2503 in 23S rRNA and position 2 of adenine 37 in tRNAs. m2A2503 modification seems to play a crucial role in the proofreading step occurring at the peptidyl transferase center and thus would serve to optimize ribosomal fidelity. This Klebsiella pneumoniae (strain 342) protein is Dual-specificity RNA methyltransferase RlmN.